A 161-amino-acid chain; its full sequence is Protein PLASTID TRANSCRIPTIONALLY ACTIVE 7 (161 aa).

Residues Met1–Ser32 constitute a chloroplast transit peptide.

Component of the transcriptionally active chromosome (TAC) complexes. Interacts with FLN1, PTAC10, PTAC12/HMR/PAP5 and PTAC14. Binds to SL1/MTERF3. In terms of tissue distribution, mostly expressed in leaves, flowers and seedlings, and, to a lower extent, in roots and stems.

Its subcellular location is the plastid. It localises to the chloroplast. Functionally, essential for chloroplast development, especially for thylakoid formation. Involved in plastid gene expression, probably by maintaining plastid-encoded RNA polymerase (PEP) activity. The polypeptide is Protein PLASTID TRANSCRIPTIONALLY ACTIVE 7 (Arabidopsis thaliana (Mouse-ear cress)).